Reading from the N-terminus, the 753-residue chain is Neuroendocrine convertase 1 (753 aa).

Positions Met1–Ala27 are cleaved as a signal peptide. Residues Lys28–Arg110 constitute a propeptide that is removed on maturation. Residues Gln129–Val450 enclose the Peptidase S8 domain. Residues Asp167 and His208 each act as charge relay system in the active site. Cystine bridges form between Cys225-Cys374 and Cys317-Cys347. The Charge relay system role is filled by Ser382. A glycan (N-linked (GlcNAc...) asparagine) is linked at Asn401. The P/Homo B domain maps to Asn460–Gln597. A disulfide bridge connects residues Cys467 and Cys494. Over residues Gln633–Val651 the composition is skewed to polar residues. A disordered region spans residues Gln633–Pro663. Asn645 is a glycosylation site (N-linked (GlcNAc...) asparagine).

Belongs to the peptidase S8 family. Furin subfamily. It depends on Ca(2+) as a cofactor.

The protein localises to the cytoplasmic vesicle. It localises to the secretory vesicle. The enzyme catalyses Release of protein hormones, neuropeptides and renin from their precursors, generally by hydrolysis of -Lys-Arg-|- bonds.. Its function is as follows. Involved in the processing of hormone and other protein precursors at sites comprised of pairs of basic amino acid residues. Substrates include POMC, renin, enkephalin, dynorphin, somatostatin, insulin and AGRP. The protein is Neuroendocrine convertase 1 (Pcsk1) of Mus cookii (Cook's mouse).